A 474-amino-acid polypeptide reads, in one-letter code: tRNA (guanine(37)-N(1))-methyltransferase (474 aa).

S-adenosyl-L-methionine is bound by residues His234, 274–275 (DL), 303–304 (DA), and Asn345. The span at 452–464 (EPEAQCESEEAEE) shows a compositional bias: acidic residues. The interval 452–474 (EPEAQCESEEAEEPSSKRIKVDT) is disordered. Residues 465–474 (PSSKRIKVDT) show a composition bias toward basic and acidic residues.

The protein belongs to the class I-like SAM-binding methyltransferase superfamily. TRM5/TYW2 family. In terms of assembly, monomer.

It is found in the mitochondrion matrix. Its subcellular location is the nucleus. The protein localises to the cytoplasm. The enzyme catalyses guanosine(37) in tRNA + S-adenosyl-L-methionine = N(1)-methylguanosine(37) in tRNA + S-adenosyl-L-homocysteine + H(+). Its function is as follows. Specifically methylates the N1 position of guanosine-37 in various cytoplasmic and mitochondrial tRNAs. Methylation is not dependent on the nature of the nucleoside 5' of the target nucleoside. This is the first step in the biosynthesis of wybutosine (yW), a modified base adjacent to the anticodon of tRNAs and required for accurate decoding. The chain is tRNA (guanine(37)-N(1))-methyltransferase from Caenorhabditis elegans.